The following is a 163-amino-acid chain: Probable RNA-binding protein EIF1AD (163 aa).

Positions 18–96 (MMEDDYELPT…VKAEISKILT (79 aa)) constitute an S1-like domain. Positions 106 to 163 (AGIWPERFAKNPPQEAKAQNDDEDSDFEDDLTPNTNRPVQESDEEDEDTDTESSDEED) are disordered. Composition is skewed to acidic residues over residues 126–136 (DDEDSDFEDDL) and 146–163 (ESDE…DEED).

This sequence belongs to the EIF1AD family.

This Drosophila pseudoobscura pseudoobscura (Fruit fly) protein is Probable RNA-binding protein EIF1AD.